Consider the following 405-residue polypeptide: Argininosuccinate synthase (405 aa).

ATP contacts are provided by residues Ala10–Ser18 and Ala37. L-citrulline contacts are provided by Tyr88 and Ser93. ATP is bound at residue Gly118. L-aspartate contacts are provided by Thr120, Asn124, and Asp125. Residue Asn124 coordinates L-citrulline. L-citrulline-binding residues include Arg128, Ser179, Ser188, Glu264, and Tyr276.

It belongs to the argininosuccinate synthase family. Type 1 subfamily. In terms of assembly, homotetramer.

Its subcellular location is the cytoplasm. It catalyses the reaction L-citrulline + L-aspartate + ATP = 2-(N(omega)-L-arginino)succinate + AMP + diphosphate + H(+). It functions in the pathway amino-acid biosynthesis; L-arginine biosynthesis; L-arginine from L-ornithine and carbamoyl phosphate: step 2/3. The sequence is that of Argininosuccinate synthase from Pseudomonas savastanoi pv. phaseolicola (strain 1448A / Race 6) (Pseudomonas syringae pv. phaseolicola (strain 1448A / Race 6)).